Reading from the N-terminus, the 122-residue chain is S-adenosylmethionine decarboxylase proenzyme (122 aa).

The active-site Schiff-base intermediate with substrate; via pyruvic acid is Ser63. The residue at position 63 (Ser63) is a Pyruvic acid (Ser); by autocatalysis. His68 acts as the Proton acceptor; for processing activity in catalysis. The active-site Proton donor; for catalytic activity is Cys83.

Belongs to the prokaryotic AdoMetDC family. Type 1 subfamily. As to quaternary structure, heterotetramer of two alpha and two beta chains arranged as a dimer of alpha/beta heterodimers. The cofactor is pyruvate. In terms of processing, is synthesized initially as an inactive proenzyme. Formation of the active enzyme involves a self-maturation process in which the active site pyruvoyl group is generated from an internal serine residue via an autocatalytic post-translational modification. Two non-identical subunits are generated from the proenzyme in this reaction, and the pyruvate is formed at the N-terminus of the alpha chain, which is derived from the carboxyl end of the proenzyme. The post-translation cleavage follows an unusual pathway, termed non-hydrolytic serinolysis, in which the side chain hydroxyl group of the serine supplies its oxygen atom to form the C-terminus of the beta chain, while the remainder of the serine residue undergoes an oxidative deamination to produce ammonia and the pyruvoyl group blocking the N-terminus of the alpha chain.

The enzyme catalyses S-adenosyl-L-methionine + H(+) = S-adenosyl 3-(methylsulfanyl)propylamine + CO2. It functions in the pathway amine and polyamine biosynthesis; S-adenosylmethioninamine biosynthesis; S-adenosylmethioninamine from S-adenosyl-L-methionine: step 1/1. Functionally, catalyzes the decarboxylation of S-adenosylmethionine to S-adenosylmethioninamine (dcAdoMet), the propylamine donor required for the synthesis of the polyamines spermine and spermidine from the diamine putrescine. The protein is S-adenosylmethionine decarboxylase proenzyme of Methanococcus vannielii (strain ATCC 35089 / DSM 1224 / JCM 13029 / OCM 148 / SB).